A 436-amino-acid chain; its full sequence is Xaa-Arg dipeptidase (436 aa).

The protein belongs to the peptidase M20A family.

The catalysed reaction is beta-alanyl-L-lysine + H2O = beta-alanine + L-lysine. It catalyses the reaction beta-alanyl-L-ornithine + H2O = beta-alanine + L-ornithine. It carries out the reaction N(2)-(4-aminobutanoyl)-L-lysine + H2O = 4-aminobutanoate + L-lysine. The enzyme catalyses N(2)-(4-aminobutanoyl)-L-ornithine + H2O = 4-aminobutanoate + L-ornithine. The catalysed reaction is N(2)-(4-aminobutanoyl)-L-arginine + H2O = 4-aminobutanoate + L-arginine. In terms of biological role, catalyzes the peptide bond hydrolysis in dipeptides having basic amino acids lysine, ornithine or arginine at C-terminus. Postulated to function in a metabolite repair mechanism by eliminating alternate dipeptide by-products formed during carnosine synthesis. This is Xaa-Arg dipeptidase from Homo sapiens (Human).